The following is a 325-amino-acid chain: MHSKVVIIGSGPSGHTAAIYLGRAELKPILYEGMLANGIAPGGQLTTTTDVENYPGFPDGILGPSLMEAFRKQSEKYGAQIITDTVSKLDLSKRPFKYCCESNEEVFHTADVVILATGAYARRLNIPGEEIYWQRGISACAVCDGAAPIFRGKPLAVVGGGDSAAEESLFLTRYATKVYLLVRRDKLRASPIMAKRLLHHPKIEILWNTVALESLGDNNLMNCVKIKNVKTQEVSELQVNGLFYAIGHEPATTLVRGQVECDKDGYIITKNGGPETNIKGFFAAGDVQDKKWRQAVTSAGSGCMAGLAAERLLAEEEEMKNIEDS.

Residues 10 to 13, 39 to 40, Q44, N53, V86, C143, D286, and 293 to 295 each bind FAD; these read SGPS, IA, and RQA. Residues C140 and C143 are joined by a disulfide bond.

It belongs to the class-II pyridine nucleotide-disulfide oxidoreductase family. In terms of assembly, homodimer. It depends on FAD as a cofactor.

Its subcellular location is the cytoplasm. It carries out the reaction [thioredoxin]-dithiol + NADP(+) = [thioredoxin]-disulfide + NADPH + H(+). The chain is Thioredoxin reductase (TRR1) from Pneumocystis carinii.